The sequence spans 42 residues: Photosystem II reaction center protein J (42 aa).

Residues 10-30 form a helical membrane-spanning segment; sequence IPLWLVGTVVGIAALTLLSVF.

Belongs to the PsbJ family. As to quaternary structure, PSII is composed of 1 copy each of membrane proteins PsbA, PsbB, PsbC, PsbD, PsbE, PsbF, PsbH, PsbI, PsbJ, PsbK, PsbL, PsbM, PsbT, PsbX, PsbY, PsbZ, Psb30/Ycf12, at least 3 peripheral proteins of the oxygen-evolving complex and a large number of cofactors. It forms dimeric complexes.

The protein resides in the plastid. It is found in the chloroplast thylakoid membrane. In terms of biological role, one of the components of the core complex of photosystem II (PSII). PSII is a light-driven water:plastoquinone oxidoreductase that uses light energy to abstract electrons from H(2)O, generating O(2) and a proton gradient subsequently used for ATP formation. It consists of a core antenna complex that captures photons, and an electron transfer chain that converts photonic excitation into a charge separation. This is Photosystem II reaction center protein J from Tupiella akineta (Green alga).